The chain runs to 131 residues: Small nuclear ribonucleoprotein SmD3b (131 aa).

Residues 7–79 enclose the Sm domain; that stretch reads IPVKLLHEAS…VRFMVIPDIL (73 aa). The disordered stretch occupies residues 96-131; sequence SSSLGVGRGRGAMRGKPAAGPGRGTGGRGAVPPVRR.

It belongs to the snRNP core protein family. Expressed in young seedlings, roots, leaves, flowers and immature siliques.

It is found in the cytoplasm. It localises to the cytosol. The protein resides in the nucleus. In terms of biological role, core component of the spliceosomal U1, U2, U4 and U5 small nuclear ribonucleoproteins (snRNPs), the building blocks of the spliceosome. May play a major role in the splicing of cellular pre-mRNAs. Required for normal plant development. In Arabidopsis thaliana (Mouse-ear cress), this protein is Small nuclear ribonucleoprotein SmD3b.